The sequence spans 258 residues: Imidazole glycerol phosphate synthase subunit HisF (258 aa).

Catalysis depends on residues D11 and D130.

It belongs to the HisA/HisF family. As to quaternary structure, heterodimer of HisH and HisF.

The protein localises to the cytoplasm. The enzyme catalyses 5-[(5-phospho-1-deoxy-D-ribulos-1-ylimino)methylamino]-1-(5-phospho-beta-D-ribosyl)imidazole-4-carboxamide + L-glutamine = D-erythro-1-(imidazol-4-yl)glycerol 3-phosphate + 5-amino-1-(5-phospho-beta-D-ribosyl)imidazole-4-carboxamide + L-glutamate + H(+). Its pathway is amino-acid biosynthesis; L-histidine biosynthesis; L-histidine from 5-phospho-alpha-D-ribose 1-diphosphate: step 5/9. IGPS catalyzes the conversion of PRFAR and glutamine to IGP, AICAR and glutamate. The HisF subunit catalyzes the cyclization activity that produces IGP and AICAR from PRFAR using the ammonia provided by the HisH subunit. The polypeptide is Imidazole glycerol phosphate synthase subunit HisF (Prochlorococcus marinus (strain MIT 9211)).